A 1030-amino-acid polypeptide reads, in one-letter code: Probable serine/threonine-protein kinase SIS8 (1030 aa).

2 stretches are compositionally biased toward polar residues: residues 44–58 (PNQS…STTK) and 399–419 (YSAS…NGIE). 4 disordered regions span residues 44-84 (PNQS…PEIK), 399-474 (YSAS…KAPF), 555-625 (TVES…ASST), and 689-736 (LGSN…SDCD). 3 stretches are compositionally biased toward basic and acidic residues: residues 426 to 435 (TEFRTGEHRS), 458 to 471 (ISRE…KVEK), and 560 to 580 (NSTE…EGRH). Low complexity predominate over residues 613-625 (SQSDSSHSEASST). Residues 748 to 1003 (ITVGERIGLG…AEIMASLKRL (256 aa)) enclose the Protein kinase domain. ATP is bound by residues 754-762 (IGLGSYGEV) and lysine 775. The active-site Proton acceptor is aspartate 871. A compositionally biased stretch (polar residues) spans 1007-1023 (VTGSNIPRPVPSSSSLP). The segment at 1007–1030 (VTGSNIPRPVPSSSSLPTEHEQKD) is disordered.

Belongs to the protein kinase superfamily. Ser/Thr protein kinase family. In terms of assembly, interacts with UGT72E1. Expressed roots, rosette and cauline leaves, and at lower levels in flowers and siliques.

It is found in the nucleus. The catalysed reaction is L-seryl-[protein] + ATP = O-phospho-L-seryl-[protein] + ADP + H(+). It carries out the reaction L-threonyl-[protein] + ATP = O-phospho-L-threonyl-[protein] + ADP + H(+). Acts as a negative regulator of salt tolerance. Mediates sugar response during early seedling development. The polypeptide is Probable serine/threonine-protein kinase SIS8 (Arabidopsis thaliana (Mouse-ear cress)).